The sequence spans 498 residues: Lysine--tRNA ligase (498 aa).

Residues Glu407 and Glu414 each coordinate Mg(2+).

This sequence belongs to the class-II aminoacyl-tRNA synthetase family. Homodimer. The cofactor is Mg(2+).

The protein resides in the cytoplasm. The catalysed reaction is tRNA(Lys) + L-lysine + ATP = L-lysyl-tRNA(Lys) + AMP + diphosphate. The sequence is that of Lysine--tRNA ligase (lysS) from Rhizobium meliloti (strain 1021) (Ensifer meliloti).